A 133-amino-acid polypeptide reads, in one-letter code: MNYMPGTASLIEDIDKKHLVLLRDGRTLIGFLRSIDQFANLVLHQTVERIHVGKKYGDIPRGIFVVRGENVVLLGEIDLEKESDTPLQQVSIEEILEEQRVQQQTRLEAEKLKVQTLKDRGLSIPRADTLDEY.

The region spanning 5–80 is the Sm domain; it reads PGTASLIEDI…VVLLGEIDLE (76 aa). Serine 123 is subject to Phosphoserine. Threonine 129 carries the phosphothreonine modification.

This sequence belongs to the snRNP Sm proteins family. As to quaternary structure, interacts with SLBP; interaction with SLBP occurs when histone mRNA is being rapidly degraded during the S phase. LSm subunits form a heteromer with a donut shape.

It localises to the cytoplasm. It is found in the P-body. In terms of biological role, plays a role in the degradation of histone mRNAs, the only eukaryotic mRNAs that are not polyadenylated. Probably also part of an LSm subunits-containing complex involved in the general process of mRNA degradation. The chain is U6 snRNA-associated Sm-like protein LSm1 (Lsm1) from Mus musculus (Mouse).